Reading from the N-terminus, the 40-residue chain is Alpha-conotoxin-like Lp1.6b (40 aa).

A propeptide spanning residues V1–R23 is cleaved from the precursor. Q24 carries the post-translational modification Pyrrolidone carboxylic acid. 2 disulfides stabilise this stretch: C26/C32 and C27/C39.

The protein belongs to the conotoxin A superfamily. Expressed by the venom duct.

The protein localises to the secreted. Functionally, alpha-conotoxins act on postsynaptic membranes, they bind to the nicotinic acetylcholine receptors (nAChR) and thus inhibit them. The chain is Alpha-conotoxin-like Lp1.6b from Conus leopardus (Leopard cone).